Here is a 435-residue protein sequence, read N- to C-terminus: Proline and serine-rich protein 2 (435 aa).

Over residues 1 to 10 (MPVTHRKSDA) the composition is skewed to basic and acidic residues. Residues 1–22 (MPVTHRKSDASDMNSDTSPSCR) are disordered. The residue at position 8 (S8) is a Phosphoserine. A compositionally biased stretch (polar residues) spans 11-20 (SDMNSDTSPS). A Phosphoserine modification is found at S43. The residue at position 45 (T45) is a Phosphothreonine. 2 stretches are compositionally biased toward low complexity: residues 92-102 (PSLEESTSSPS) and 113-126 (PAPG…LPEG). 2 disordered regions span residues 92–276 (PSLE…RAAV) and 295–420 (AFPA…SEEA). T146 bears the Phosphothreonine mark. Over residues 146–169 (TPPPPDPPAPETLLAPPPLPSTPD) the composition is skewed to pro residues. The residue at position 166 (S166) is a Phosphoserine. At T167 the chain carries Phosphothreonine. Phosphoserine occurs at positions 179, 212, and 215. The segment covering 228-237 (PAARGPRSGD) has biased composition (low complexity). Position 252 is an asymmetric dimethylarginine; alternate (R252). At R252 the chain carries Omega-N-methylarginine; alternate. Positions 302–311 (AGEGAPGGGS) are enriched in gly residues. A Phosphoserine modification is found at S312. R320 carries the post-translational modification Omega-N-methylarginine; alternate. Residue R320 is modified to Dimethylated arginine; alternate. R378 is subject to Omega-N-methylarginine. S400 is subject to Phosphoserine. Position 414 is an omega-N-methylarginine (R414).

The polypeptide is Proline and serine-rich protein 2 (PROSER2) (Homo sapiens (Human)).